The sequence spans 371 residues: Chaperone protein DnaJ (371 aa).

The J domain maps to S5–G70. The segment at G139 to R217 adopts a CR-type zinc-finger fold. Zn(2+) is bound by residues C152, C155, C169, C172, C191, C194, C205, and C208. CXXCXGXG motif repeat units follow at residues C152 to G159, C169 to G176, C191 to G198, and C205 to G212.

The protein belongs to the DnaJ family. In terms of assembly, homodimer. It depends on Zn(2+) as a cofactor.

The protein resides in the cytoplasm. Its function is as follows. Participates actively in the response to hyperosmotic and heat shock by preventing the aggregation of stress-denatured proteins and by disaggregating proteins, also in an autonomous, DnaK-independent fashion. Unfolded proteins bind initially to DnaJ; upon interaction with the DnaJ-bound protein, DnaK hydrolyzes its bound ATP, resulting in the formation of a stable complex. GrpE releases ADP from DnaK; ATP binding to DnaK triggers the release of the substrate protein, thus completing the reaction cycle. Several rounds of ATP-dependent interactions between DnaJ, DnaK and GrpE are required for fully efficient folding. Also involved, together with DnaK and GrpE, in the DNA replication of plasmids through activation of initiation proteins. This Leptospira borgpetersenii serovar Hardjo-bovis (strain JB197) protein is Chaperone protein DnaJ.